The chain runs to 371 residues: Ecto-ADP-ribosyltransferase 3 (371 aa).

A signal peptide spans 1–26 (MKMGHFEMVTTLLAAAVLMDIFQVKA). C43 and C255 form a disulfide bridge. A TR mART core domain is found at 64–250 (ALLRMVWDNA…LVLQSINSTC (187 aa)). Positions 101 and 182 each coordinate NAD(+). A disordered region spans residues 306 to 346 (VLQTEENPLLPDEKPDRSRGKANNPTPGLVPGPKSHPSASS). S345 is lipidated: GPI-anchor amidated serine. The propeptide at 346-371 (SGNTLLPSVMASTILLVASAVNFIEL) is removed in mature form.

This sequence belongs to the Arg-specific ADP-ribosyltransferase family.

The protein resides in the cell membrane. It catalyses the reaction L-arginyl-[protein] + NAD(+) = N(omega)-(ADP-D-ribosyl)-L-arginyl-[protein] + nicotinamide + H(+). The protein is Ecto-ADP-ribosyltransferase 3 (Art3) of Mus musculus (Mouse).